Consider the following 334-residue polypeptide: Protein-glutamate methylesterase/protein-glutamine glutaminase 2 (334 aa).

One can recognise a Response regulatory domain in the interval Asn-2–Leu-120. Residue Asp-53 is modified to 4-aspartylphosphate. The 201-residue stretch at Pro-134–Ile-334 folds into the CheB-type methylesterase domain. Residues Ser-157, His-184, and Asp-277 contribute to the active site.

This sequence belongs to the CheB family. Phosphorylated by CheA. Phosphorylation of the N-terminal regulatory domain activates the methylesterase activity.

The protein localises to the cytoplasm. The catalysed reaction is [protein]-L-glutamate 5-O-methyl ester + H2O = L-glutamyl-[protein] + methanol + H(+). It catalyses the reaction L-glutaminyl-[protein] + H2O = L-glutamyl-[protein] + NH4(+). In terms of biological role, involved in chemotaxis. Part of a chemotaxis signal transduction system that modulates chemotaxis in response to various stimuli. Catalyzes the demethylation of specific methylglutamate residues introduced into the chemoreceptors (methyl-accepting chemotaxis proteins or MCP) by CheR. Also mediates the irreversible deamidation of specific glutamine residues to glutamic acid. The sequence is that of Protein-glutamate methylesterase/protein-glutamine glutaminase 2 from Burkholderia orbicola (strain AU 1054).